The following is a 106-amino-acid chain: Small ribosomal subunit protein bS16 (106 aa).

The disordered stretch occupies residues 84 to 106; it reads KREARNNPEKAVPRKERKAADGK.

This chain is Small ribosomal subunit protein bS16, found in Rhodopseudomonas palustris (strain ATCC BAA-98 / CGA009).